Consider the following 259-residue polypeptide: GEM-like protein 1 (259 aa).

Basic and acidic residues predominate over residues 1–11 (MSGQENHDHGR). The interval 1-79 (MSGQENHDHG…PSPAPRNTMD (79 aa)) is disordered. Low complexity predominate over residues 13–30 (SSTPAAASEPSKAAAHSS). Residues 138–215 (KVFKQTFDCL…NQLKAVNPST (78 aa)) form the GRAM domain.

Belongs to the GEM family. In terms of assembly, interacts with AFH1.

The protein is GEM-like protein 1 (FIP1) of Arabidopsis thaliana (Mouse-ear cress).